A 221-amino-acid polypeptide reads, in one-letter code: Ependymin-2 (221 aa).

The signal sequence occupies residues 1 to 21 (MQDFAFAALSIWLCLGATALA). N-linked (GlcNAc...) asparagine glycosylation is found at asparagine 33, asparagine 73, and asparagine 97.

It belongs to the ependymin family. Binds calcium through the terminal sialic acids. EPDs are synthesized in the meninx and secreted in the cerebrospinal fluid.

It is found in the secreted. May play a role in neural plasticity. May be involved during axon regeneration. The chain is Ependymin-2 (epd2) from Oncorhynchus mykiss (Rainbow trout).